We begin with the raw amino-acid sequence, 329 residues long: MTQLFYDTDADLSLLNNKTIAIIGYGSQGHAHALNLKDSGMDVIVGLYKGSKSESKAINDGLEVFTVSEACEKADWIMILLPDEFQKDVYIKEIEPNLKEGKILSFAHGFNIRFGLIKPPSFVDVVMIAPKGPGHTVRWEYQNGQGVPALFAVEQDYSSNARSLAMAYAKGIGGTRAGILETNFKEETETDLFGEQAVLCGGLSELVKSGFETLVEAGYQPELAYFECLHEVKLIVDLMVKGGLSQMRDSISNTAEYGDYVSGKRLINSDTKKEMQKILKDIQDGTFAKNFVEECDRDKPLMTKLRAENSQHEIEKVGKGLRAMFSWLK.

The KARI N-terminal Rossmann domain maps to 2–182; the sequence is TQLFYDTDAD…GGTRAGILET (181 aa). Residues 25-28, Ser-51, Ser-53, and 83-86 contribute to the NADP(+) site; these read YGSQ and DEFQ. Residue His-108 is part of the active site. Gly-134 provides a ligand contact to NADP(+). A KARI C-terminal knotted domain is found at 183–328; it reads NFKEETETDL…KGLRAMFSWL (146 aa). Mg(2+) contacts are provided by Asp-191, Glu-195, Glu-227, and Glu-231. Ser-252 serves as a coordination point for substrate.

It belongs to the ketol-acid reductoisomerase family. It depends on Mg(2+) as a cofactor.

The enzyme catalyses (2R)-2,3-dihydroxy-3-methylbutanoate + NADP(+) = (2S)-2-acetolactate + NADPH + H(+). It catalyses the reaction (2R,3R)-2,3-dihydroxy-3-methylpentanoate + NADP(+) = (S)-2-ethyl-2-hydroxy-3-oxobutanoate + NADPH + H(+). Its pathway is amino-acid biosynthesis; L-isoleucine biosynthesis; L-isoleucine from 2-oxobutanoate: step 2/4. It functions in the pathway amino-acid biosynthesis; L-valine biosynthesis; L-valine from pyruvate: step 2/4. Its function is as follows. Involved in the biosynthesis of branched-chain amino acids (BCAA). Catalyzes an alkyl-migration followed by a ketol-acid reduction of (S)-2-acetolactate (S2AL) to yield (R)-2,3-dihydroxy-isovalerate. In the isomerase reaction, S2AL is rearranged via a Mg-dependent methyl migration to produce 3-hydroxy-3-methyl-2-ketobutyrate (HMKB). In the reductase reaction, this 2-ketoacid undergoes a metal-dependent reduction by NADPH to yield (R)-2,3-dihydroxy-isovalerate. This Prochlorococcus marinus (strain MIT 9515) protein is Ketol-acid reductoisomerase (NADP(+)).